The chain runs to 107 residues: Putative double-stranded DNA mimic protein ETA_15890 (107 aa).

The protein belongs to the putative dsDNA mimic protein family.

In terms of biological role, may act as a double-stranded DNA (dsDNA) mimic. Probably regulates the activity of a dsDNA-binding protein. The sequence is that of Putative double-stranded DNA mimic protein ETA_15890 from Erwinia tasmaniensis (strain DSM 17950 / CFBP 7177 / CIP 109463 / NCPPB 4357 / Et1/99).